Reading from the N-terminus, the 221-residue chain is ATP-dependent Clp protease proteolytic subunit 1, mitochondrial (221 aa).

The transit peptide at 1–25 (MLRRLVTSSLSASRSMSASVQSRVG) directs the protein to the mitochondrion. The active-site Nucleophile is the serine 120. Histidine 145 is an active-site residue.

The protein belongs to the peptidase S14 family. In terms of assembly, tetradecamer that assembles into a two heptameric rings with a central cavity. In terms of tissue distribution, expressed in the intestine.

The protein resides in the mitochondrion matrix. The catalysed reaction is Hydrolysis of proteins to small peptides in the presence of ATP and magnesium. alpha-casein is the usual test substrate. In the absence of ATP, only oligopeptides shorter than five residues are hydrolyzed (such as succinyl-Leu-Tyr-|-NHMec, and Leu-Tyr-Leu-|-Tyr-Trp, in which cleavage of the -Tyr-|-Leu- and -Tyr-|-Trp bonds also occurs).. Clp cleaves peptides in various proteins in a process that requires ATP hydrolysis. Clp may be responsible for a fairly general and central housekeeping function rather than for the degradation of specific substrates. The polypeptide is ATP-dependent Clp protease proteolytic subunit 1, mitochondrial (clpp-1) (Caenorhabditis elegans).